Here is a 128-residue protein sequence, read N- to C-terminus: Large ribosomal subunit protein uL22 (128 aa).

This sequence belongs to the universal ribosomal protein uL22 family. In terms of assembly, part of the 50S ribosomal subunit.

In terms of biological role, this protein binds specifically to 23S rRNA; its binding is stimulated by other ribosomal proteins, e.g. L4, L17, and L20. It is important during the early stages of 50S assembly. It makes multiple contacts with different domains of the 23S rRNA in the assembled 50S subunit and ribosome. Functionally, the globular domain of the protein is located near the polypeptide exit tunnel on the outside of the subunit, while an extended beta-hairpin is found that lines the wall of the exit tunnel in the center of the 70S ribosome. This is Large ribosomal subunit protein uL22 from Prochlorococcus marinus (strain MIT 9515).